The following is a 290-amino-acid chain: Protease HtpX (290 aa).

The next 2 helical transmembrane spans lie at 6–26 (LFLV…NILF) and 36–56 (ISGL…ISLL). Residue histidine 143 participates in Zn(2+) binding. Glutamate 144 is a catalytic residue. Histidine 147 is a Zn(2+) binding site. 2 helical membrane passes run 158–178 (LIQG…AGVI) and 200–220 (ITVF…VMWF). Glutamate 225 serves as a coordination point for Zn(2+).

Belongs to the peptidase M48B family. Zn(2+) serves as cofactor.

It localises to the cell inner membrane. The chain is Protease HtpX from Aeromonas salmonicida (strain A449).